The sequence spans 191 residues: Small ribosomal subunit protein uS11m (191 aa).

The segment at 37-62 (PRLEDSAARQNTEREAAPSRFSLYPP) is disordered. Positions 38-53 (RLEDSAARQNTEREAA) are enriched in basic and acidic residues.

Belongs to the universal ribosomal protein uS11 family. Component of the mitochondrial ribosome small subunit (28S) which comprises a 12S rRNA and about 30 distinct proteins.

The protein resides in the mitochondrion. The chain is Small ribosomal subunit protein uS11m (Mrps11) from Mus musculus (Mouse).